The following is a 107-amino-acid chain: Replication protein A 14 kDa subunit A (107 aa).

Met1 is modified (N-acetylmethionine).

This sequence belongs to the replication factor A protein 3 family. Component of the heterotrimeric canonical replication protein A complex (RPA).

The protein resides in the nucleus. Functionally, as part of the replication protein A (RPA/RP-A), a single-stranded DNA-binding heterotrimeric complex, may play an essential role in DNA replication, recombination and repair. Binds and stabilizes single-stranded DNA intermediates, preventing complementary DNA reannealing and recruiting different proteins involved in DNA metabolism. The sequence is that of Replication protein A 14 kDa subunit A (RPA3A) from Arabidopsis thaliana (Mouse-ear cress).